A 469-amino-acid polypeptide reads, in one-letter code: ATP-dependent protease ATPase subunit HslU (469 aa).

ATP-binding positions include isoleucine 24, 66 to 71, aspartate 282, glutamate 347, and arginine 419; that span reads GVGKTE.

It belongs to the ClpX chaperone family. HslU subfamily. A double ring-shaped homohexamer of HslV is capped on each side by a ring-shaped HslU homohexamer. The assembly of the HslU/HslV complex is dependent on binding of ATP.

Its subcellular location is the cytoplasm. Functionally, ATPase subunit of a proteasome-like degradation complex; this subunit has chaperone activity. The binding of ATP and its subsequent hydrolysis by HslU are essential for unfolding of protein substrates subsequently hydrolyzed by HslV. HslU recognizes the N-terminal part of its protein substrates and unfolds these before they are guided to HslV for hydrolysis. The polypeptide is ATP-dependent protease ATPase subunit HslU (Listeria monocytogenes serotype 4a (strain HCC23)).